The following is a 1123-amino-acid chain: Inner tegument protein (1123 aa).

Disordered stretches follow at residues 1–27 (MADRGLPSEAPVVTTSPAGPPSDGPMQ) and 1047–1123 (RPLA…TSYQ). Residues 568–1123 (WDITPTTPAT…PTDLPLTSYQ (556 aa)) are interaction with large tegument protein.

It belongs to the herpesviridae inner tegument protein family. Interacts (via C-terminus) with the large tegument protein/LTP (via N-terminus). Interacts with host DST. Interacts with host RIGI; this interaction inhibits RIGI activation. Interacts with host CGAS; this interaction inhibits host CGAS activation. Interacts with host TAOK3.

It localises to the virion tegument. It is found in the host cytoplasm. The protein localises to the host nucleus. The protein resides in the host Golgi apparatus. Its subcellular location is the host trans-Golgi network. The enzyme catalyses L-asparaginyl-[protein] + H2O = L-aspartyl-[protein] + NH4(+). It carries out the reaction L-glutaminyl-[protein] + H2O = L-glutamyl-[protein] + NH4(+). Plays an essential role in cytoplasmic secondary envelopment during viral egress. Interacts with the capsid via the large tegument protein/LTP and participates in its transport to the host trans-Golgi network (TGN) where secondary envelopment occurs. Modulates tegumentation and capsid accumulation at the viral assembly complex. Plays a role in microtubule-based retrograde axonal transport to promote neuroinvasion. Also plays a role in the inhibition of host immune response by acting as a viral deamidase. Deamidates host RIGI on two asparagines which becomes unable to sense viral dsRNA. In turn, its ability to trigger antiviral immune response and restrict viral replication is inhibited. Also deamidates a critical asparagine on host CGAS which abolishes cGAMP synthesis and downstream innate immune activation. This Homo sapiens (Human) protein is Inner tegument protein (UL37).